The primary structure comprises 166 residues: Putative tRNA (cytidine(34)-2'-O)-methyltransferase (166 aa).

Residues Leu83, Gly109, Ile130, and Ser138 each coordinate S-adenosyl-L-methionine.

The protein belongs to the class IV-like SAM-binding methyltransferase superfamily. RNA methyltransferase TrmH family. TrmL subfamily.

The protein localises to the cytoplasm. The enzyme catalyses cytidine(34) in tRNA + S-adenosyl-L-methionine = 2'-O-methylcytidine(34) in tRNA + S-adenosyl-L-homocysteine + H(+). The catalysed reaction is 5-carboxymethylaminomethyluridine(34) in tRNA(Leu) + S-adenosyl-L-methionine = 5-carboxymethylaminomethyl-2'-O-methyluridine(34) in tRNA(Leu) + S-adenosyl-L-homocysteine + H(+). Its function is as follows. Could methylate the ribose at the nucleotide 34 wobble position in tRNA. In Mycoplasma genitalium (strain ATCC 33530 / DSM 19775 / NCTC 10195 / G37) (Mycoplasmoides genitalium), this protein is Putative tRNA (cytidine(34)-2'-O)-methyltransferase.